We begin with the raw amino-acid sequence, 447 residues long: N-succinylarginine dihydrolase (447 aa).

Residues 19–28 (AGLSFGNEAS), Asn110, and 137–138 (HR) each bind substrate. The active site involves Glu174. Arg212 contributes to the substrate binding site. His248 is an active-site residue. Substrate contacts are provided by Asp250 and Asn359. Catalysis depends on Cys365, which acts as the Nucleophile.

Belongs to the succinylarginine dihydrolase family. In terms of assembly, homodimer.

The catalysed reaction is N(2)-succinyl-L-arginine + 2 H2O + 2 H(+) = N(2)-succinyl-L-ornithine + 2 NH4(+) + CO2. It participates in amino-acid degradation; L-arginine degradation via AST pathway; L-glutamate and succinate from L-arginine: step 2/5. Functionally, catalyzes the hydrolysis of N(2)-succinylarginine into N(2)-succinylornithine, ammonia and CO(2). The protein is N-succinylarginine dihydrolase of Escherichia coli O81 (strain ED1a).